The primary structure comprises 94 residues: Aspartyl/glutamyl-tRNA(Asn/Gln) amidotransferase subunit C (94 aa).

The protein belongs to the GatC family. As to quaternary structure, heterotrimer of A, B and C subunits.

It catalyses the reaction L-glutamyl-tRNA(Gln) + L-glutamine + ATP + H2O = L-glutaminyl-tRNA(Gln) + L-glutamate + ADP + phosphate + H(+). The enzyme catalyses L-aspartyl-tRNA(Asn) + L-glutamine + ATP + H2O = L-asparaginyl-tRNA(Asn) + L-glutamate + ADP + phosphate + 2 H(+). Functionally, allows the formation of correctly charged Asn-tRNA(Asn) or Gln-tRNA(Gln) through the transamidation of misacylated Asp-tRNA(Asn) or Glu-tRNA(Gln) in organisms which lack either or both of asparaginyl-tRNA or glutaminyl-tRNA synthetases. The reaction takes place in the presence of glutamine and ATP through an activated phospho-Asp-tRNA(Asn) or phospho-Glu-tRNA(Gln). This is Aspartyl/glutamyl-tRNA(Asn/Gln) amidotransferase subunit C from Desulfotalea psychrophila (strain LSv54 / DSM 12343).